A 326-amino-acid chain; its full sequence is Probable cell division protein WhiA (326 aa).

The H-T-H motif DNA-binding region spans 275–308 (SLDELGHHADPPMTKDAVAGRIRRLLAMADKKAV).

It belongs to the WhiA family.

Its function is as follows. Involved in cell division and chromosome segregation. This Clavibacter michiganensis subsp. michiganensis (strain NCPPB 382) protein is Probable cell division protein WhiA.